The primary structure comprises 245 residues: Cysteine-rich secretory protein 3 (245 aa).

The first 20 residues, 1–20, serve as a signal peptide directing secretion; it reads MTLFPVLLFLVAGLLPSFPA. Residues 43–171 enclose the SCP domain; that stretch reads VNKHNELRRA…VLKYYYVCQY (129 aa). Cystine bridges form between cysteine 191–cysteine 198, cysteine 194–cysteine 203, cysteine 207–cysteine 240, cysteine 216–cysteine 234, and cysteine 225–cysteine 238. The region spanning 207–240 is the ShKT domain; it reads CKYEDLYSNCKSLKLTLTCKHQLVRDSCKASCNC. Asparagine 239 carries N-linked (GlcNAc...) asparagine glycosylation.

Belongs to the CRISP family. In terms of assembly, interacts with A1BG. As to expression, salivary gland, pancreas and prostate &gt; epididymis, ovary, thymus and colon.

The protein localises to the secreted. In Homo sapiens (Human), this protein is Cysteine-rich secretory protein 3 (CRISP3).